The following is a 196-amino-acid chain: Penicillin-binding protein activator LpoB (196 aa).

Residues 1–16 (MKKYLGIVLMALVIAG) form the signal peptide. Cys-17 is lipidated: N-palmitoyl cysteine. Cys-17 is lipidated: S-diacylglycerol cysteine. Residues 24-54 (TEQPATIEPAVPTPSKPQLPPSESQPLPTPP) are disordered. Residues 34-43 (VPTPSKPQLP) are compositionally biased toward pro residues.

Belongs to the LpoB family. In terms of assembly, interacts with PBP1b.

It localises to the cell outer membrane. Functionally, regulator of peptidoglycan synthesis that is essential for the function of penicillin-binding protein 1B (PBP1b). This chain is Penicillin-binding protein activator LpoB, found in Dickeya dadantii (strain 3937) (Erwinia chrysanthemi (strain 3937)).